The sequence spans 378 residues: Glutamate 5-kinase (378 aa).

Position 19 (Lys-19) interacts with ATP. The substrate site is built by Ser-59, Asp-146, and Asn-158. ATP contacts are provided by residues 178–179 (TD) and 220–226 (TGGMATK). Residues 285–363 (QGQIQVDAGA…GEIGEILGYK (79 aa)) form the PUA domain.

It belongs to the glutamate 5-kinase family.

The protein localises to the cytoplasm. The enzyme catalyses L-glutamate + ATP = L-glutamyl 5-phosphate + ADP. The protein operates within amino-acid biosynthesis; L-proline biosynthesis; L-glutamate 5-semialdehyde from L-glutamate: step 1/2. In terms of biological role, catalyzes the transfer of a phosphate group to glutamate to form L-glutamate 5-phosphate. The sequence is that of Glutamate 5-kinase from Moorella thermoacetica (strain ATCC 39073 / JCM 9320).